We begin with the raw amino-acid sequence, 88 residues long: UPF0237 protein SMU_72 (88 aa).

The ACT domain occupies Ile4 to Gln77.

The protein belongs to the UPF0237 family. Homodimer.

This is UPF0237 protein SMU_72 from Streptococcus mutans serotype c (strain ATCC 700610 / UA159).